The sequence spans 509 residues: Cytochrome P450 monooxygenase AFT11-1 (509 aa).

Cys-432 lines the heme pocket.

It belongs to the cytochrome P450 family. Heme is required as a cofactor.

Its pathway is mycotoxin biosynthesis. In terms of biological role, cytochrome P450 monooxygenase; part of the gene clusters that mediate the biosynthesis of the host-selective toxins (HSTs) AF-toxins responsible for Alternaria black spot of strawberry disease by the strawberry pathotype. AF-toxin I and III are valine derivatives of 2,3-dyhydroxy-isovaleric acid and 2-hydroxy-isovaleric acid respectively, while AF II is an isoleucine derivative of 2-hydroxy-valeric acid. These derivatives are bound to a 9,10-epoxy-8-hydroxy-9-methyl-decatrienoic acid (EDA) moiety. On cellular level, AF-toxins affect plasma membrane of susceptible cells and cause a sudden increase in loss of K(+) after a few minutes of toxin treatment. The aldo-keto reductase AFTS1 catalyzes the conversion of 2-keto-isovaleric acid (2-KIV) to 2-hydroxy-isovaleric acid (2-HIV) by reduction of its ketone to an alcohol. The acyl-CoA ligase AFT1, the hydrolase AFT2 and the enoyl-CoA hydratases AFT3 and AFT6, but also the polyketide synthase AFT9, the acyl-CoA dehydrogenase AFT10, the cytochrome P450 monooxygenase AFT11 and the oxidoreductase AFT12 are all involved in the biosynthesis of the AK-, AF- and ACT-toxin common EDA structural moiety. The exact function of each enzyme, and of additional enzymes identified within the AF-toxin clusters have still to be determined. The polypeptide is Cytochrome P450 monooxygenase AFT11-1 (Alternaria alternata (Alternaria rot fungus)).